The sequence spans 283 residues: Homeobox protein BarH-like 2 (283 aa).

2 disordered regions span residues 107–141 (AAAAAAETPGGEALASSESETEQPTPRQKKPRRSR) and 198–283 (KGGQ…PPLS). The span at 122 to 132 (SSESETEQPTP) shows a compositional bias: polar residues. Residues 139-198 (RSRTIFTELQLMGLEKKFQKQKYLSTPDRLDLAQSLGLTQLQVKTWYQNRRMKWKKMVLK) constitute a DNA-binding region (homeobox). The segment covering 268–277 (QPQELSEASS) has biased composition (low complexity).

It belongs to the BAR homeobox family. As to expression, nervous system, particularly in the telencephalon, spinal cord, and dorsal root ganglia.

Its subcellular location is the nucleus. Transcription factor. Binds optimally to the DNA consensus sequence 5'-YYTAATGRTTTTY-3'. May control the expression of neural adhesion molecules such as L1 or Ng-CAM during embryonic development of both the central and peripherical nervous system. May be involved in controlling adhesive processes in keratinizing epithelia. The chain is Homeobox protein BarH-like 2 (Barx2) from Mus musculus (Mouse).